The chain runs to 442 residues: Proline--tRNA ligase (442 aa).

It belongs to the class-II aminoacyl-tRNA synthetase family. ProS type 2 subfamily. In terms of assembly, homodimer.

It localises to the cytoplasm. It carries out the reaction tRNA(Pro) + L-proline + ATP = L-prolyl-tRNA(Pro) + AMP + diphosphate. Its function is as follows. Catalyzes the attachment of proline to tRNA(Pro) in a two-step reaction: proline is first activated by ATP to form Pro-AMP and then transferred to the acceptor end of tRNA(Pro). This Brucella melitensis biotype 2 (strain ATCC 23457) protein is Proline--tRNA ligase.